The chain runs to 344 residues: MIELKNIGKQFEVNGKKIIALDNVNLVVPKGTICGVIGASGAGKSTLIRCVNLLERPTVGNVIVDGQDLTTLSSQELISARRSIAMIFQHFNLLSSQTVFENVALPLRLSNTPTEHITKKVNELLELVGLTERKDVYPSNLSGGQKQRVAIARALASDPKVLLCDEATSALDPVTTQSILQLLKEINKRLGLTILLITHEMDVVKRICDRVAVIDQGKLIETGSVSEIFANPTTQLAQQFIQSTFHVELPTEYTEQFSSQPTLNSKPIIKFEFTGNSVDAPVLSMASKKFGIDFSILMSQIDYAGGVKFGFVIAEVEGDGEAITAAKCYLINNNVKVEVLGYVG.

The ABC transporter domain maps to 2–241 (IELKNIGKQF…PTTQLAQQFI (240 aa)). Residue 38 to 45 (GASGAGKS) coordinates ATP.

It belongs to the ABC transporter superfamily. Methionine importer (TC 3.A.1.24) family. In terms of assembly, the complex is composed of two ATP-binding proteins (MetN), two transmembrane proteins (MetI) and a solute-binding protein (MetQ).

The protein localises to the cell inner membrane. It catalyses the reaction L-methionine(out) + ATP + H2O = L-methionine(in) + ADP + phosphate + H(+). The catalysed reaction is D-methionine(out) + ATP + H2O = D-methionine(in) + ADP + phosphate + H(+). Its function is as follows. Part of the ABC transporter complex MetNIQ involved in methionine import. Responsible for energy coupling to the transport system. This Haemophilus ducreyi (strain 35000HP / ATCC 700724) protein is Methionine import ATP-binding protein MetN.